A 353-amino-acid polypeptide reads, in one-letter code: MIDRLKKIQEKYLRIEDELAKATASDTLKNLSKERSRLTPVYTKADEYLKITKDCQDAKSLLESENDPDMHSMLKSEIEEGEKKLEELAKELEIMLLPPDPNSGKSILVEIRAGTGGEESGLFCADLFRMYNKYADKKGLRVEIIDMSQTGIGGYKEIVFSLDDDKAYDLFKFESGTHRVQRIPETESGGRIHTSAVTVAILPEAEEKEVEIKESDLRIDVYRSSGAGGQHVNTTDSAVRITHIPTGIVVASQEERSQIKNRDKAMRVLRARIADQAAETAKLSADALKKAQVGSGDRSERIRTYNFPQGRCTDHRIGFTSHNLPAIMEGDLDELIDALIQEDRSKRLAEAKA.

An N5-methylglutamine modification is found at Gln-230.

It belongs to the prokaryotic/mitochondrial release factor family. Post-translationally, methylated by PrmC. Methylation increases the termination efficiency of RF1.

The protein localises to the cytoplasm. Functionally, peptide chain release factor 1 directs the termination of translation in response to the peptide chain termination codons UAG and UAA. The protein is Peptide chain release factor 1 of Leptospira biflexa serovar Patoc (strain Patoc 1 / ATCC 23582 / Paris).